Reading from the N-terminus, the 661-residue chain is tRNA uridine 5-carboxymethylaminomethyl modification enzyme MnmG (661 aa).

FAD contacts are provided by residues 16–21, valine 128, and serine 183; that span reads GAGHAG. A disordered region spans residues 206–230; it reads PRVNGNTIDYSKTEEEPGDKTPRHF. Residues 216-230 show a composition bias toward basic and acidic residues; it reads SKTEEEPGDKTPRHF. 277–291 contacts NAD(+); it reads GPRYCPSIEDKVVRF. Glutamine 374 provides a ligand contact to FAD.

Belongs to the MnmG family. In terms of assembly, homodimer. Heterotetramer of two MnmE and two MnmG subunits. It depends on FAD as a cofactor.

The protein localises to the cytoplasm. Its function is as follows. NAD-binding protein involved in the addition of a carboxymethylaminomethyl (cmnm) group at the wobble position (U34) of certain tRNAs, forming tRNA-cmnm(5)s(2)U34. The chain is tRNA uridine 5-carboxymethylaminomethyl modification enzyme MnmG from Lactobacillus helveticus (strain DPC 4571).